We begin with the raw amino-acid sequence, 253 residues long: DNA repair protein RecO (253 aa).

It belongs to the RecO family.

Functionally, involved in DNA repair and RecF pathway recombination. This is DNA repair protein RecO from Streptococcus agalactiae serotype III (strain NEM316).